A 379-amino-acid polypeptide reads, in one-letter code: Cytochrome b (379 aa).

4 helical membrane-spanning segments follow: residues 33-53, 77-98, 113-133, and 178-198; these read FGSLLGMCLMIQILTGLFLAM, WLIRYLHANGASMFFICLFIHV, WNIGIILFLMTMATAFVGYVL, and FFAFHFILPFIIAAFALVHLL. Residues histidine 83 and histidine 97 each contribute to the heme b site. Residues histidine 182 and histidine 196 each coordinate heme b. An a ubiquinone-binding site is contributed by histidine 201. Transmembrane regions (helical) follow at residues 226 to 246, 288 to 308, 320 to 340, and 347 to 367; these read TKDLLGIFLLLLVLMILALFF, LGGVLALVLSILILAAFPLLN, VTQVIYWIFIANLLVLTWIGG, and FTMIGQIASITYFAIITILMP.

It belongs to the cytochrome b family. As to quaternary structure, the cytochrome bc1 complex contains 11 subunits: 3 respiratory subunits (MT-CYB, CYC1 and UQCRFS1), 2 core proteins (UQCRC1 and UQCRC2) and 6 low-molecular weight proteins (UQCRH/QCR6, UQCRB/QCR7, UQCRQ/QCR8, UQCR10/QCR9, UQCR11/QCR10 and a cleavage product of UQCRFS1). This cytochrome bc1 complex then forms a dimer. Requires heme b as cofactor.

The protein resides in the mitochondrion inner membrane. Its function is as follows. Component of the ubiquinol-cytochrome c reductase complex (complex III or cytochrome b-c1 complex) that is part of the mitochondrial respiratory chain. The b-c1 complex mediates electron transfer from ubiquinol to cytochrome c. Contributes to the generation of a proton gradient across the mitochondrial membrane that is then used for ATP synthesis. The polypeptide is Cytochrome b (MT-CYB) (Akodon fumeus (Smoky grass mouse)).